Consider the following 1295-residue polypeptide: Phosphoribosylformylglycinamidine synthase (1295 aa).

Positions 305–327 are disordered; it reads WPGAATGSGGEIRDEGATGRGAK. Residues 307-318, 386-388, and alanine 678 contribute to the ATP site; these read GAATGSGGEIRD and TGY. Mg(2+) contacts are provided by aspartate 679, glutamate 718, asparagine 722, and aspartate 884. Serine 886 provides a ligand contact to ATP. The Glutamine amidotransferase type-1 domain maps to 1042-1295; it reads VAVLREQGVN…IFRNARKQLG (254 aa). Cysteine 1135 (nucleophile) is an active-site residue. Active-site residues include histidine 1260 and glutamate 1262.

In the N-terminal section; belongs to the FGAMS family. In terms of assembly, monomer.

Its subcellular location is the cytoplasm. It catalyses the reaction N(2)-formyl-N(1)-(5-phospho-beta-D-ribosyl)glycinamide + L-glutamine + ATP + H2O = 2-formamido-N(1)-(5-O-phospho-beta-D-ribosyl)acetamidine + L-glutamate + ADP + phosphate + H(+). Its pathway is purine metabolism; IMP biosynthesis via de novo pathway; 5-amino-1-(5-phospho-D-ribosyl)imidazole from N(2)-formyl-N(1)-(5-phospho-D-ribosyl)glycinamide: step 1/2. Phosphoribosylformylglycinamidine synthase involved in the purines biosynthetic pathway. Catalyzes the ATP-dependent conversion of formylglycinamide ribonucleotide (FGAR) and glutamine to yield formylglycinamidine ribonucleotide (FGAM) and glutamate. This is Phosphoribosylformylglycinamidine synthase from Salmonella typhi.